The primary structure comprises 636 residues: MYKYGTVVDPAMTTNRRSRLSGFRCASTARVTATLLLSFLAFSPSSASSDFGDRFHDDIVLPPGPVLPSAPEIPEPAEHTFSLRHIYHHGTHLHPSLHRKRDVVHEQSRVYLAAEDDFSEYDILRLKAKSRPEPIHRLADRRPSVVDPMVAESRQRGYAAVLDASAWTMDQVSSPDIKDKDTVLTLALMTANAYVEHDTDADWEDVGERWNRSADFGWESDGLRGHVFVDDTNSTIVIGLKGTTTAVFDGEGTTTNDKVNDNLFFSCCCAQQGQWTWHQVCDCATGTYSCNNTCVVQALREENRYYGAARELYSNVTELYPDAQVWLTGHSLGGAVTSMLGMTYGLPVVTFEAVPEALPASRLGLPVPPGASAEYPQMRENTGTFHFGHTADPVYIGTCNGATASCTYGGYAMESTCHAGYECVYDVVADKGWRVGIGTHRIRSVIDDVIKKYDGVPECKRTPECRDCAQWKMYESNGTETTTTSSPSTTSTTRTRTRTSTCETPGWWGCLDKTTPVTTTTSTTSSSTSTCKTPGWFGCKDKTTSESSTTTTTEASPTTTCETPGRFWGCRDEVEATTTAKPGQVTNVPVTAAPTGTTDDSLSTALPETQRCLARNWFGICKEWAIDDLEFATDEM.

Topologically, residues M1–R19 are cytoplasmic. Residues L20–F42 form a helical; Signal-anchor for type II membrane protein membrane-spanning segment. Residues S43 to M636 lie on the Lumenal side of the membrane. N211, N233, N291, N315, and N477 each carry an N-linked (GlcNAc...) asparagine glycan. Positions G478–S500 are disordered. Positions T479–S500 are enriched in low complexity.

The protein belongs to the AB hydrolase superfamily. Lipase family. Binds to both phosphatidylinositol (PI) and phosphatidylinositol 3,5-bisphosphate (PIP2).

The protein localises to the endosome. The protein resides in the multivesicular body membrane. It is found in the prevacuolar compartment membrane. The enzyme catalyses a triacylglycerol + H2O = a diacylglycerol + a fatty acid + H(+). Lipase which is essential for lysis of subvacuolar cytoplasm to vacuole targeted bodies and intravacuolar autophagic bodies. Involved in the lysis of intravacuolar multivesicular body (MVB) vesicles. The intravacuolar membrane disintegration by ATG15 is critical to life span extension. Autophagy is required for proper vegetative growth, asexual/sexual reproduction, and full virulence. Autophagy is particularly involved in the biosynthesis of deoxynivalenol (DON), an important virulence determinant. The sequence is that of Putative lipase ATG15 from Gibberella zeae (strain ATCC MYA-4620 / CBS 123657 / FGSC 9075 / NRRL 31084 / PH-1) (Wheat head blight fungus).